Here is a 124-residue protein sequence, read N- to C-terminus: MENTNIVKATFDTETLEGQIKIFNAQTGGGQSFKNLPDGTIIEANAIAQYKQVSDTYGDAKEETVTTIFAADGSLYSAISKTVAEAASDLIDLVTRHKLETFKVKVVQGTSSKGNVFFSLQLSL.

This sequence belongs to the phi29likevirus single-strand-binding protein family. As to quaternary structure, monomer.

Functionally, single-stranded DNA binding protein required for the elongation during viral DNA replication by strand displacement. Displaced viral DNA strands are transiently coated with the ssDNA-binding protein and therefore protected against nucleases. The latter is then probably removed by the replisome that performs lagging strand synthesis or during the events that lead up to the recombination process. Stimulates in vitro DNA replication several fold. Has helix-destabilizing activity since it removes secondary structure from the ssDNA in replicative intermediates. The chain is Single-stranded DNA-binding protein (5) from Bacillus subtilis (Bacteriophage phi-29).